The primary structure comprises 396 residues: Probable sugar efflux transporter (396 aa).

The next 12 membrane-spanning stretches (helical) occupy residues 15–35 (VVTL…PVGL), 50–70 (VGIM…PFML), 81–101 (LICL…SWSF), 103–123 (VLVI…SITA), 136–156 (AQAL…GLPL), 170–190 (FFAI…LLPL), 209–229 (PALM…YTAY), 246–266 (FATA…VIFG), 275–295 (ALVS…LPAA), 299–319 (IHLG…GLGM), 333–353 (VAMA…ALVG), and 364–384 (MIGY…IIIF).

This sequence belongs to the major facilitator superfamily. SotB (TC 2.A.1.2) family.

It is found in the cell inner membrane. Involved in the efflux of sugars. The physiological role may be the reduction of the intracellular concentration of toxic sugars or sugar metabolites. This Shigella boydii serotype 18 (strain CDC 3083-94 / BS512) protein is Probable sugar efflux transporter.